We begin with the raw amino-acid sequence, 355 residues long: Chorismate synthase (355 aa).

Arg-48 contacts NADP(+). FMN-binding positions include 125-127, 239-240, Gly-280, 295-299, and Arg-321; these read RSS, NA, and KPVAT.

Belongs to the chorismate synthase family. In terms of assembly, homotetramer. It depends on FMNH2 as a cofactor.

It carries out the reaction 5-O-(1-carboxyvinyl)-3-phosphoshikimate = chorismate + phosphate. Its pathway is metabolic intermediate biosynthesis; chorismate biosynthesis; chorismate from D-erythrose 4-phosphate and phosphoenolpyruvate: step 7/7. Its function is as follows. Catalyzes the anti-1,4-elimination of the C-3 phosphate and the C-6 proR hydrogen from 5-enolpyruvylshikimate-3-phosphate (EPSP) to yield chorismate, which is the branch point compound that serves as the starting substrate for the three terminal pathways of aromatic amino acid biosynthesis. This reaction introduces a second double bond into the aromatic ring system. This Flavobacterium psychrophilum (strain ATCC 49511 / DSM 21280 / CIP 103535 / JIP02/86) protein is Chorismate synthase.